Consider the following 105-residue polypeptide: MNAPLRGQVYRCDLGYGAKPWLIVSNNARNRHTADVVAVRLTTTRRTIPTWVAMGPSDPLTGYVNADNIETLGKDELGDYLGEVTPATMNKINTALATALGLPWP.

It belongs to the PemK/MazF family. Forms a complex with cognate antitoxin MazE1.

Its function is as follows. Toxic component of a type II toxin-antitoxin (TA) system. Acts as an endoribonuclease on single-strand RNA, cleaving between the first and second bases in the sequence UCGCU. Neutralized by coexpression with cognate antitoxin MazE1. The polypeptide is Endoribonuclease MazF1 (mazF1) (Mycobacterium bovis (strain ATCC BAA-935 / AF2122/97)).